A 572-amino-acid chain; its full sequence is Phenylalanine--tRNA ligase beta subunit (572 aa).

The B5 domain occupies 278–353 (LTPKEFEVEF…IAYGYNEIKP (76 aa)). Residues D331, D337, E340, and D341 each coordinate Mg(2+).

Belongs to the phenylalanyl-tRNA synthetase beta subunit family. Type 2 subfamily. Tetramer of two alpha and two beta subunits. The cofactor is Mg(2+).

Its subcellular location is the cytoplasm. It catalyses the reaction tRNA(Phe) + L-phenylalanine + ATP = L-phenylalanyl-tRNA(Phe) + AMP + diphosphate + H(+). This chain is Phenylalanine--tRNA ligase beta subunit, found in Thermococcus onnurineus (strain NA1).